Here is a 126-residue protein sequence, read N- to C-terminus: Hydrogenase maturation factor HypA (126 aa).

A Ni(2+)-binding site is contributed by H2. C78, C81, C97, and C100 together coordinate Zn(2+).

Belongs to the HypA/HybF family.

Involved in the maturation of [NiFe] hydrogenases. Required for nickel insertion into the metal center of the hydrogenase. The polypeptide is Hydrogenase maturation factor HypA (Methanococcus maripaludis (strain C6 / ATCC BAA-1332)).